Reading from the N-terminus, the 342-residue chain is Deoxyguanosinetriphosphate triphosphohydrolase-like protein (342 aa).

The HD domain occupies 75 to 190 (RLVHTLEVSQ…VRFADKIAYV (116 aa)).

The protein belongs to the dGTPase family. Type 2 subfamily.

This Clostridium perfringens (strain 13 / Type A) protein is Deoxyguanosinetriphosphate triphosphohydrolase-like protein.